The following is a 236-amino-acid chain: MLVPIPALNDNYIWLYGRENLPVIAIDVAECKNLSAYLTQHHLQLEAVLLTHYHDDHTGGVEELKRYYPDIPVYGPAETADKGATHIVNEGNIQTAHYRIEVVPSGGHTANHVSYLIDNHLFCGDTLFSAGCGRVFTGDYGQMFESITRLKQLPDKTVICPAHEYTLSNLVFAEAFAPNEKVKSAVKNQRISVESLRAQNKPSLPTTLALEKNINPFLQAENLADFIYLRKAKDNF.

Positions 52, 54, 56, 57, 108, 125, and 163 each coordinate Zn(2+).

Belongs to the metallo-beta-lactamase superfamily. Glyoxalase II family. Monomer. The cofactor is Zn(2+).

The catalysed reaction is an S-(2-hydroxyacyl)glutathione + H2O = a 2-hydroxy carboxylate + glutathione + H(+). It functions in the pathway secondary metabolite metabolism; methylglyoxal degradation; (R)-lactate from methylglyoxal: step 2/2. In terms of biological role, thiolesterase that catalyzes the hydrolysis of S-D-lactoyl-glutathione to form glutathione and D-lactic acid. The protein is Hydroxyacylglutathione hydrolase of Mannheimia succiniciproducens (strain KCTC 0769BP / MBEL55E).